The primary structure comprises 329 residues: MAQSTTYSRVLGTGSYLPPNRVSNQDLAARLAKQGIETSDEWIVARTGIHARHFAEPDVTTSDLALIASQRAIEAADVDPQAIDLIIVATSTPDFVFPSTACLLQNKLGIKNNGAAFDVQAVCSGFAYAVATADSFIRSGQHRTALVVGAETFSRILDFNDRTTCVLFGDGAGAVVLQASDEPGVLASALHADGSHSNILCTPGNVNGGIVQGSAFLHMDGQAVFKLAVNVLEKVAVEALQKADLQPEQIDWLIPHQANIRIMQSTCRKLGLPQERMVVTVHEHGNTSAASIPLALDVAVRDGRIQRGHNVLIEGVGGGFTWGASVIRY.

Catalysis depends on residues C123 and H256. The tract at residues Q257–R261 is ACP-binding. Residue N286 is part of the active site.

It belongs to the thiolase-like superfamily. FabH family. Homodimer.

It is found in the cytoplasm. The catalysed reaction is malonyl-[ACP] + acetyl-CoA + H(+) = 3-oxobutanoyl-[ACP] + CO2 + CoA. It functions in the pathway lipid metabolism; fatty acid biosynthesis. Catalyzes the condensation reaction of fatty acid synthesis by the addition to an acyl acceptor of two carbons from malonyl-ACP. Catalyzes the first condensation reaction which initiates fatty acid synthesis and may therefore play a role in governing the total rate of fatty acid production. Possesses both acetoacetyl-ACP synthase and acetyl transacylase activities. Its substrate specificity determines the biosynthesis of branched-chain and/or straight-chain of fatty acids. In Paraburkholderia phymatum (strain DSM 17167 / CIP 108236 / LMG 21445 / STM815) (Burkholderia phymatum), this protein is Beta-ketoacyl-[acyl-carrier-protein] synthase III.